Reading from the N-terminus, the 379-residue chain is UPF0450 protein C17orf58 homolog (379 aa).

Residues 1-17 (MIPALTVPLLFLCATSA) form the signal peptide. 2 disordered regions span residues 76–95 (RTRA…PDKT) and 162–194 (TASQ…MNPH). Over residues 180–194 (SMDHESNRPGKMNPH) the composition is skewed to basic and acidic residues. 3 cysteine pairs are disulfide-bonded: cysteine 234–cysteine 308, cysteine 238–cysteine 312, and cysteine 249–cysteine 378. The 145-residue stretch at 234–378 (CIAECHRDKD…KVLAAAHSKC (145 aa)) folds into the NTR domain.

Belongs to the UPF0450 family.

This Xenopus laevis (African clawed frog) protein is UPF0450 protein C17orf58 homolog.